Consider the following 711-residue polypeptide: Forkhead box protein P1 (711 aa).

Residues 1–19 (MMQESGSEAKSNGSTIQNG) show a composition bias toward polar residues. Positions 1-41 (MMQESGSEAKSNGSTIQNGSSGGNHLLECGTLRDTRSNGEA) are disordered. S115 is subject to Phosphoserine. 2 disordered regions span residues 273 to 292 (HTAE…TSTC) and 305 to 332 (MNPH…EHPH). The segment covering 305 to 317 (MNPHASTNGQLSV) has biased composition (polar residues). Basic and acidic residues predominate over residues 320–332 (PKRESLSHEEHPH). Residue K321 forms a Glycyl lysine isopeptide (Lys-Gly) (interchain with G-Cter in SUMO2) linkage. The C2H2-type zinc-finger motif lies at 340–365 (GVCKWPGCEAVCDDFPAFLKHLNSEH). Residues 382 to 403 (VQQLELQLAKDKERLQAMMTHL) are leucine-zipper. Residues K406 and K411 each participate in a glycyl lysine isopeptide (Lys-Gly) (interchain with G-Cter in SUMO2) cross-link. Residues 416–420 (PLNLV) are CTBP1-binding. Residues 424-437 (TLSKSASEASPQSL) are compositionally biased toward polar residues. The disordered stretch occupies residues 424 to 456 (TLSKSASEASPQSLPHTPTTPTAPLTPVTQGPS). The span at 438–452 (PHTPTTPTAPLTPVT) shows a compositional bias: low complexity. K476 is covalently cross-linked (Glycyl lysine isopeptide (Lys-Gly) (interchain with G-Cter in SUMO2)). A DNA-binding region (fork-head) is located at residues 499–589 (RPPFTYASLI…PQKISGNPSL (91 aa)). The segment at 645–711 (EHTNSNESDS…EDEPVNEDME (67 aa)) is disordered. A compositionally biased stretch (polar residues) spans 646–657 (HTNSNESDSSPG). T687 is modified (phosphothreonine). S692 is modified (phosphoserine). Residues 701-711 (YEDEPVNEDME) show a composition bias toward acidic residues.

In terms of assembly, forms homodimers and heterodimers with FOXP2 and FOXP4. Dimerization is required for DNA-binding. Self-associates. Interacts with CTBP1. Interacts with NCOR2 and AR. Interacts with FOXP2. Interacts with TBR1. Interacts with AURKA; this interaction facilitates the phosphorylation of FOXP1, which suppresses the expression of FBXL7. Interacts with ZMYM2.

It localises to the nucleus. Functionally, transcriptional repressor. Can act with CTBP1 to synergistically repress transcription but CTPBP1 is not essential. Plays an important role in the specification and differentiation of lung epithelium. Acts cooperatively with FOXP4 to regulate lung secretory epithelial cell fate and regeneration by restricting the goblet cell lineage program; the function may involve regulation of AGR2. Essential transcriptional regulator of B-cell development. Involved in regulation of cardiac muscle cell proliferation. Involved in the columnar organization of spinal motor neurons. Promotes the formation of the lateral motor neuron column (LMC) and the preganglionic motor column (PGC) and is required for respective appropriate motor axon projections. The segment-appropriate generation of spinal cord motor columns requires cooperation with other Hox proteins. Can regulate PITX3 promoter activity; may promote midbrain identity in embryonic stem cell-derived dopamine neurons by regulating PITX3. Negatively regulates the differentiation of T follicular helper cells T(FH)s. Involved in maintenance of hair follicle stem cell quiescence; the function probably involves regulation of FGF18. Represses transcription of various pro-apoptotic genes and cooperates with NF-kappa B-signaling in promoting B-cell expansion by inhibition of caspase-dependent apoptosis. Binds to CSF1R promoter elements and is involved in regulation of monocyte differentiation and macrophage functions; repression of CSF1R in monocytes seems to involve NCOR2 as corepressor. Involved in endothelial cell proliferation, tube formation and migration indicative for a role in angiogenesis; the role in neovascularization seems to implicate suppression of SEMA5B. Can negatively regulate androgen receptor signaling. Acts as a transcriptional activator of the FBXL7 promoter; this activity is regulated by AURKA. The sequence is that of Forkhead box protein P1 (Foxp1) from Rattus norvegicus (Rat).